A 441-amino-acid polypeptide reads, in one-letter code: Ribosomal protein uS12 methylthiotransferase RimO (441 aa).

In terms of domain architecture, MTTase N-terminal spans 8 to 118 (PKIGFVSLGC…VLEHVHHYVP (111 aa)). [4Fe-4S] cluster is bound by residues Cys17, Cys53, Cys82, Cys150, Cys154, and Cys157. The 238-residue stretch at 136-373 (LTPRHYAYLK…MQLQQQISAE (238 aa)) folds into the Radical SAM core domain. The TRAM domain occupies 376-441 (QEKVGREILV…DEYDLWGSRV (66 aa)).

This sequence belongs to the methylthiotransferase family. RimO subfamily. [4Fe-4S] cluster serves as cofactor.

It is found in the cytoplasm. The catalysed reaction is L-aspartate(89)-[ribosomal protein uS12]-hydrogen + (sulfur carrier)-SH + AH2 + 2 S-adenosyl-L-methionine = 3-methylsulfanyl-L-aspartate(89)-[ribosomal protein uS12]-hydrogen + (sulfur carrier)-H + 5'-deoxyadenosine + L-methionine + A + S-adenosyl-L-homocysteine + 2 H(+). Its function is as follows. Catalyzes the methylthiolation of an aspartic acid residue of ribosomal protein uS12. The chain is Ribosomal protein uS12 methylthiotransferase RimO from Shigella flexneri.